The following is a 395-amino-acid chain: Flap endonuclease 1 (395 aa).

An N-domain region spans residues 1-104 (MGIKHLYQII…GELAKRFMRK (104 aa)). Asp34 contributes to the Mg(2+) binding site. 2 residues coordinate DNA: Arg47 and Arg70. Asp86, Glu158, Glu160, Asp179, and Asp181 together coordinate Mg(2+). Residues 122-253 (EVEKFSRRTV…NTALKLIRDH (132 aa)) form an I-domain region. Glu158 is a binding site for DNA. DNA-binding residues include Gly231 and Asp233. Residue Asp233 coordinates Mg(2+). The segment at 341–349 (QQSRLEGFF) is interaction with PCNA. Over residues 360 to 389 (AVLKRKHEEKLELQKKKKKEDSKAKKEAKS) the composition is skewed to basic and acidic residues. The interval 360 to 395 (AVLKRKHEEKLELQKKKKKEDSKAKKEAKSKPRGTT) is disordered.

The protein belongs to the XPG/RAD2 endonuclease family. FEN1 subfamily. As to quaternary structure, interacts with PCNA. Three molecules of FEN1 bind to one PCNA trimer with each molecule binding to one PCNA monomer. PCNA stimulates the nuclease activity without altering cleavage specificity. Mg(2+) serves as cofactor. In terms of processing, phosphorylated. Phosphorylation upon DNA damage induces relocalization to the nuclear plasma.

It is found in the nucleus. The protein localises to the nucleolus. Its subcellular location is the nucleoplasm. The protein resides in the mitochondrion. Functionally, structure-specific nuclease with 5'-flap endonuclease and 5'-3' exonuclease activities involved in DNA replication and repair. During DNA replication, cleaves the 5'-overhanging flap structure that is generated by displacement synthesis when DNA polymerase encounters the 5'-end of a downstream Okazaki fragment. It enters the flap from the 5'-end and then tracks to cleave the flap base, leaving a nick for ligation. Also involved in the long patch base excision repair (LP-BER) pathway, by cleaving within the apurinic/apyrimidinic (AP) site-terminated flap. Acts as a genome stabilization factor that prevents flaps from equilibrating into structures that lead to duplications and deletions. Also possesses 5'-3' exonuclease activity on nicked or gapped double-stranded DNA, and exhibits RNase H activity. Also involved in replication and repair of rDNA and in repairing mitochondrial DNA. This Ajellomyces capsulatus (strain H143) (Darling's disease fungus) protein is Flap endonuclease 1.